A 240-amino-acid chain; its full sequence is Putative exosome complex component RRP41 (240 aa).

The protein belongs to the RNase PH family. Component of the RNA exosome complex.

The protein resides in the cytoplasm. It localises to the nucleus. Its subcellular location is the nucleolus. The protein localises to the nucleoplasm. Non-catalytic component of the RNA exosome complex which has 3'-&gt;5' exoribonuclease activity and participates in a multitude of cellular RNA processing and degradation events. This chain is Putative exosome complex component RRP41 (exos-4.1), found in Caenorhabditis briggsae.